Consider the following 398-residue polypeptide: Phosphoglycerate kinase (398 aa).

Substrate is bound by residues 23–25 (DLN), Arg-38, 61–64 (HFGR), Arg-120, and Arg-153. Residues Lys-203, Glu-325, and 355–358 (GGDT) each bind ATP.

It belongs to the phosphoglycerate kinase family. As to quaternary structure, monomer.

The protein localises to the cytoplasm. The enzyme catalyses (2R)-3-phosphoglycerate + ATP = (2R)-3-phospho-glyceroyl phosphate + ADP. The protein operates within carbohydrate degradation; glycolysis; pyruvate from D-glyceraldehyde 3-phosphate: step 2/5. This chain is Phosphoglycerate kinase, found in Sphingopyxis alaskensis (strain DSM 13593 / LMG 18877 / RB2256) (Sphingomonas alaskensis).